Consider the following 477-residue polypeptide: Bifunctional protein HldE (477 aa).

Residues 1 to 319 (MTVIFPNFSK…NIMNSHICTT (319 aa)) are ribokinase. Residue 195-198 (NISE) coordinates ATP. The active site involves Asp264. Residues 346 to 477 (MTNGVFDILH…NIINAIKRKN (132 aa)) are cytidylyltransferase.

This sequence in the N-terminal section; belongs to the carbohydrate kinase PfkB family. In the C-terminal section; belongs to the cytidylyltransferase family. As to quaternary structure, homodimer.

It catalyses the reaction D-glycero-beta-D-manno-heptose 7-phosphate + ATP = D-glycero-beta-D-manno-heptose 1,7-bisphosphate + ADP + H(+). It carries out the reaction D-glycero-beta-D-manno-heptose 1-phosphate + ATP + H(+) = ADP-D-glycero-beta-D-manno-heptose + diphosphate. It participates in nucleotide-sugar biosynthesis; ADP-L-glycero-beta-D-manno-heptose biosynthesis; ADP-L-glycero-beta-D-manno-heptose from D-glycero-beta-D-manno-heptose 7-phosphate: step 1/4. It functions in the pathway nucleotide-sugar biosynthesis; ADP-L-glycero-beta-D-manno-heptose biosynthesis; ADP-L-glycero-beta-D-manno-heptose from D-glycero-beta-D-manno-heptose 7-phosphate: step 3/4. Functionally, catalyzes the phosphorylation of D-glycero-D-manno-heptose 7-phosphate at the C-1 position to selectively form D-glycero-beta-D-manno-heptose-1,7-bisphosphate. In terms of biological role, catalyzes the ADP transfer from ATP to D-glycero-beta-D-manno-heptose 1-phosphate, yielding ADP-D-glycero-beta-D-manno-heptose. In Blochmanniella pennsylvanica (strain BPEN), this protein is Bifunctional protein HldE.